A 555-amino-acid polypeptide reads, in one-letter code: Connector enhancer of kinase suppressor of ras 3 (555 aa).

The SAM domain occupies 7-72 (WSPKQVVDWT…LEAVDLLCAL (66 aa)). The CRIC domain occupies 80–174 (NMKNLVLKLR…TTVQKDCFVA (95 aa)). In terms of domain architecture, PDZ spans 211–293 (EVHLPNIKPG…GVVLLLKKRP (83 aa)). Disordered regions lie at residues 309-334 (WKPP…DTSL), 347-390 (PPPP…FLDQ), and 517-537 (IPFQ…KSSS). A DUF1170 domain is found at 325–546 (SPESTMDTSL…STEPSLLVSW (222 aa)). S381 and S383 each carry phosphoserine.

The protein belongs to the CNKSR family. As to quaternary structure, interacts with epithelial sodium channel ENaC. Interacts directly with SCNN1A (ENaC subunit alpha) and SCNN1B (ENaC subunit beta) C-terminal tails. Interacts with ENaC regulatory proteins NEDD4L, RAF1 and SGK1.

The protein resides in the cytoplasm. It localises to the apical cell membrane. Functionally, involved in transepithelial sodium transport. Regulates aldosterone-induced and epithelial sodium channel (ENaC)-mediated sodium transport through regulation of ENaC cell surface expression. Acts as a scaffold protein coordinating the assembly of an ENaC-regulatory complex (ERC). This is Connector enhancer of kinase suppressor of ras 3 (CNKSR3) from Homo sapiens (Human).